The sequence spans 90 residues: Small ribosomal subunit protein bS16 (90 aa).

This sequence belongs to the bacterial ribosomal protein bS16 family.

The polypeptide is Small ribosomal subunit protein bS16 (Lactococcus lactis subsp. lactis (strain IL1403) (Streptococcus lactis)).